Reading from the N-terminus, the 562-residue chain is Sensor histidine kinase MtrB (562 aa).

The next 2 helical transmembrane spans lie at 42 to 62 (VVAL…FVLT) and 213 to 233 (GTMA…ALLV). The HAMP domain occupies 235-287 (RQVVVPVRSASRIAERFAEGHLSERMPVRGEDDMARLAVSFNDMAESLSRQIT). Residues 302-519 (DVSHELRTPL…CFRLTLPLVR (218 aa)) enclose the Histidine kinase domain. The segment at 526-562 (SPLPMKPILQPSPQASTAGQQHGTQRQRLREHAERSR) is disordered. The segment covering 536-551 (PSPQASTAGQQHGTQR) has biased composition (polar residues). A compositionally biased stretch (basic and acidic residues) spans 553 to 562 (RLREHAERSR).

Its subcellular location is the cell membrane. The catalysed reaction is ATP + protein L-histidine = ADP + protein N-phospho-L-histidine.. In terms of biological role, member of the two-component regulatory system MtrA/MtrB. Seems to function as a membrane-associated protein kinase that phosphorylates MtrA in response to environmental signals. The protein is Sensor histidine kinase MtrB (mtrB) of Mycobacterium leprae (strain TN).